A 64-amino-acid chain; its full sequence is Mitotic-spindle organizing protein 1 (64 aa).

This sequence belongs to the MOZART1 family. In terms of assembly, part of the gamma-tubulin complex. Interacts directly with alp6/GPC3.

The protein localises to the cytoplasm. It is found in the cytoskeleton. The protein resides in the microtubule organizing center. Its subcellular location is the spindle pole body. Its function is as follows. Required for gamma-tubulin complex recruitment to the microtubule organizing center (MTOC). This is Mitotic-spindle organizing protein 1 (mzt1) from Schizosaccharomyces pombe (strain 972 / ATCC 24843) (Fission yeast).